A 251-amino-acid polypeptide reads, in one-letter code: Aliphatic sulfonates import ATP-binding protein SsuB (251 aa).

One can recognise an ABC transporter domain in the interval valine 3 to glutamine 231. Glycine 39–serine 46 lines the ATP pocket.

It belongs to the ABC transporter superfamily. Aliphatic sulfonates importer (TC 3.A.1.17.2) family. As to quaternary structure, the complex is composed of two ATP-binding proteins (SsuB), two transmembrane proteins (SsuC) and a solute-binding protein (SsuA).

It is found in the cell membrane. It catalyses the reaction ATP + H2O + aliphatic sulfonate-[sulfonate-binding protein]Side 1 = ADP + phosphate + aliphatic sulfonateSide 2 + [sulfonate-binding protein]Side 1.. Its function is as follows. Part of the ABC transporter complex SsuABC involved in aliphatic sulfonates import. Responsible for energy coupling to the transport system. This Bacillus cereus (strain ATCC 10987 / NRS 248) protein is Aliphatic sulfonates import ATP-binding protein SsuB.